The sequence spans 452 residues: Methionine aminopeptidase 2 (452 aa).

The interval 1–96 is disordered; sequence MAVQALPEIN…VPLSTLFPNN (96 aa). A compositionally biased stretch (low complexity) spans 18–35; sequence GAANAAAKGQAAQGTAGN. Residues 36 to 53 show a composition bias toward acidic residues; that stretch reads DDAENDESDEDKEDEQEV. Positions 62 to 77 are enriched in basic residues; sequence GKKKKKKTKKKKKKGT. His202 is a substrate binding site. Residues Asp222, Asp233, and His302 each contribute to the a divalent metal cation site. Position 310 (His310) interacts with substrate. Positions 338 and 433 each coordinate a divalent metal cation.

Belongs to the peptidase M24A family. Methionine aminopeptidase eukaryotic type 2 subfamily. Co(2+) serves as cofactor. It depends on Zn(2+) as a cofactor. Mn(2+) is required as a cofactor. The cofactor is Fe(2+).

Its subcellular location is the cytoplasm. The enzyme catalyses Release of N-terminal amino acids, preferentially methionine, from peptides and arylamides.. Functionally, cotranslationally removes the N-terminal methionine from nascent proteins. The N-terminal methionine is often cleaved when the second residue in the primary sequence is small and uncharged (Met-Ala-, Cys, Gly, Pro, Ser, Thr, or Val). This Coccidioides posadasii (strain C735) (Valley fever fungus) protein is Methionine aminopeptidase 2.